A 94-amino-acid chain; its full sequence is Large ribosomal subunit protein uL23 (94 aa).

It belongs to the universal ribosomal protein uL23 family. Part of the 50S ribosomal subunit. Contacts protein L29, and trigger factor when it is bound to the ribosome.

Functionally, one of the early assembly proteins it binds 23S rRNA. One of the proteins that surrounds the polypeptide exit tunnel on the outside of the ribosome. Forms the main docking site for trigger factor binding to the ribosome. In Roseiflexus castenholzii (strain DSM 13941 / HLO8), this protein is Large ribosomal subunit protein uL23.